We begin with the raw amino-acid sequence, 29 residues long: Mycofactocin precursor peptide (29 aa).

This sequence belongs to the mycofactocin precursor peptide family. The post-translational modifications that lead to mycofactocin involve oxidative decarboxylation of the C-terminal tyrosine residue catalyzed by MftC, introduction of a tyramine-valine cross-link, removal of the modified C-terminal dipeptide by MftE. The released dipeptide then undergoes oxidative deamination by MftD, glycosylation by MftF and methylation by an unknown enzyme.

Its function is as follows. Precursor peptide that leads to mycofactocin (MFT) after extensive post-translational modifications by enzymes encoded by adjacent genes. Mycofactocin acts as a redox cofactor of nicotinamide-dependent oxidoreductases encoded in the same locus. This chain is Mycofactocin precursor peptide, found in Mycobacterium tuberculosis (strain ATCC 25618 / H37Rv).